A 446-amino-acid polypeptide reads, in one-letter code: Baeyer-Villiger monooxygenase dmxR6 (446 aa).

It belongs to the AflY oxidoreductase family.

Its pathway is secondary metabolite biosynthesis. In terms of biological role, baeyer-Villiger monooxygenase; part of the gene cluster that mediates the biosynthesis of the dimeric xanthones cryptosporioptides. The pathway begins with the synthesis of atrochrysone thioester by the polyketide synthase dmx-nrPKS. The atrochrysone carboxyl ACP thioesterase dmxR1 then breaks the thioester bond and releases the atrochrysone carboxylic acid from dmx-nrPKS. Atrochrysone carboxylic acid is decarboxylated by the decarboxylase dmxR15, and oxidized by the anthrone oxygenase dmxR16 to yield emodin. Emodin is then reduced to emodin hydroquinone by the oxidoreductase dmxR7. A-ring reduction by the short chain dehydrogenase dmxR18, dehydration by the scytalone dehydratase-like protein dmxR17 and probable spontaneous re-oxidation, results in overall deoxygenation to chrysophanol. Baeyer-Villiger oxidation by the Baeyer-Villiger monooxygenase (BVMO) dmxR6 then yields monodictylactone in equilibrium with monodictyphenone. In the case of the cryptosporioptides biosynthesis, monodictylactone is reduced at C-12 to an alcohol (by the short chain dehydrogenases dmxR12 or dmxR8) and hydroxylated at C-5 by dmxR9, yielding the electron-rich aromatic which could eliminate H(2)O to form the ortho-quinonemethide, followed by tautomerisation to paraquinone and complete the formal reduction to produce the 10-methylgroup. Conjugate addition of C-4a-OH to the resulting paraquinone by the monooxygenase dmxR10 then gives cyclohexadienone, which is then reduced at C-5 by the short chain dehydrogenase dmxR3 to give the dihydroxanthone. The 6,7-epoxide in the cryptosporioptides could be introduced by the cytochrome P450 monooxygenase dmxL3. The highly reducing PKS dmxL2 manufactures butyrate, which is further carboxylated by dmxL1 to form ethylmalonate. It is not yet clear whether the carboxylation occurs while the butyrate is attached to the ACP of dmxL2, but this unusual fungal metabolite could then be esterified to O-5 by the O-acetyltransferase dmxR13. Finally, dimerization performed by dmxR5 gives the observed dimers cryptosporioptides A, B and C as the final products of the pathway. This chain is Baeyer-Villiger monooxygenase dmxR6, found in Cryptosporiopsis sp. (strain 8999).